The following is a 71-amino-acid chain: Ranatuerin-2PLa (71 aa).

Residues 1–22 (MFTTKKSMLLFFFLGTISLSLC) form the signal peptide. A propeptide spanning residues 23–41 (EQERGADEDDGVEMTEEEV) is cleaved from the precursor. The cysteines at positions 66 and 71 are disulfide-linked.

In terms of tissue distribution, expressed by the skin glands.

It localises to the secreted. In terms of biological role, may have antimicrobial activity against the Gram-negative bacterium E.coli. This is Ranatuerin-2PLa from Lithobates palustris (Pickerel frog).